Consider the following 483-residue polypeptide: Glutamate--tRNA ligase (483 aa).

The short motif at 9–19 (PSPTGYLHIGN) is the 'HIGH' region element. The short motif at 250 to 254 (KLSKR) is the 'KMSKS' region element. Lys-253 serves as a coordination point for ATP.

This sequence belongs to the class-I aminoacyl-tRNA synthetase family. Glutamate--tRNA ligase type 1 subfamily. As to quaternary structure, monomer.

Its subcellular location is the cytoplasm. It carries out the reaction tRNA(Glu) + L-glutamate + ATP = L-glutamyl-tRNA(Glu) + AMP + diphosphate. Its function is as follows. Catalyzes the attachment of glutamate to tRNA(Glu) in a two-step reaction: glutamate is first activated by ATP to form Glu-AMP and then transferred to the acceptor end of tRNA(Glu). This is Glutamate--tRNA ligase from Blochmanniella floridana.